Consider the following 512-residue polypeptide: ETS translocation variant 3 (512 aa).

The ETS DNA-binding region spans 35-116; that stretch reads IQLWHFILEL…KGKRFTYKFN (82 aa). Residues 136–222 are disordered; it reads VPQSAPPVPT…NAIGGGGIGH (87 aa). A phosphoserine mark is found at Ser139, Ser159, and Ser315. The span at 158–184 shows a compositional bias: polar residues; that stretch reads HSPTNDVQPGRFSASSLTASGQESSNG. The tract at residues 336–512 is disordered; it reads PEESTQFSIK…QGLATAAADA (177 aa). Residues 380-406 are compositionally biased toward basic and acidic residues; that stretch reads IKVEPASEKDPESLRQSAREKEEHTQE. Residue Lys381 forms a Glycyl lysine isopeptide (Lys-Gly) (interchain with G-Cter in SUMO2) linkage. Lys388 bears the N6-acetyllysine; alternate mark. Lys388 is covalently cross-linked (Glycyl lysine isopeptide (Lys-Gly) (interchain with G-Cter in SUMO2); alternate). Over residues 443–452 the composition is skewed to acidic residues; it reads EPLEVTEDIE. 2 stretches are compositionally biased toward basic and acidic residues: residues 453-468 and 479-491; these read DRPGKEPSAPEKKEDA and RWNDDPEARELSK.

The protein belongs to the ETS family.

The protein localises to the nucleus. Its function is as follows. Transcriptional repressor that contribute to growth arrest during terminal macrophage differentiation by repressing target genes involved in Ras-dependent proliferation. Represses MMP1 promoter activity. This is ETS translocation variant 3 (ETV3) from Pan paniscus (Pygmy chimpanzee).